The sequence spans 417 residues: Serine hydroxymethyltransferase (417 aa).

Residues Leu121 and 125–127 (GHL) contribute to the (6S)-5,6,7,8-tetrahydrofolate site. The residue at position 229 (Lys229) is an N6-(pyridoxal phosphate)lysine. 355–357 (SPF) contributes to the (6S)-5,6,7,8-tetrahydrofolate binding site.

This sequence belongs to the SHMT family. Homodimer. The cofactor is pyridoxal 5'-phosphate.

Its subcellular location is the cytoplasm. The enzyme catalyses (6R)-5,10-methylene-5,6,7,8-tetrahydrofolate + glycine + H2O = (6S)-5,6,7,8-tetrahydrofolate + L-serine. The protein operates within one-carbon metabolism; tetrahydrofolate interconversion. It functions in the pathway amino-acid biosynthesis; glycine biosynthesis; glycine from L-serine: step 1/1. Its function is as follows. Catalyzes the reversible interconversion of serine and glycine with tetrahydrofolate (THF) serving as the one-carbon carrier. This reaction serves as the major source of one-carbon groups required for the biosynthesis of purines, thymidylate, methionine, and other important biomolecules. Also exhibits THF-independent aldolase activity toward beta-hydroxyamino acids, producing glycine and aldehydes, via a retro-aldol mechanism. The polypeptide is Serine hydroxymethyltransferase (Buchnera aphidicola subsp. Schizaphis graminum (strain Sg)).